Here is a 364-residue protein sequence, read N- to C-terminus: Coproporphyrin III ferrochelatase (364 aa).

Positions 29 and 118 each coordinate Fe-coproporphyrin III. The Fe(2+) site is built by histidine 169 and glutamate 250.

It belongs to the ferrochelatase family.

It is found in the cytoplasm. It catalyses the reaction Fe-coproporphyrin III + 2 H(+) = coproporphyrin III + Fe(2+). It functions in the pathway porphyrin-containing compound metabolism; protoheme biosynthesis. In terms of biological role, involved in coproporphyrin-dependent heme b biosynthesis. Catalyzes the insertion of ferrous iron into coproporphyrin III to form Fe-coproporphyrin III. This chain is Coproporphyrin III ferrochelatase, found in Streptococcus pneumoniae (strain ATCC 700669 / Spain 23F-1).